The primary structure comprises 117 residues: MMLEPSIDKLLDQVDSKYSLVVLEAKRAHELRDKERPTKEFKAVKNTLRALEEIADGTVKIHPSPELKRETLVEKRELERLQAKMKEQLIKEQIAKEEAEEEAKQKNSRAAKAAAAE.

Basic and acidic residues predominate over residues 96–105 (KEEAEEEAKQ). The segment at 96–117 (KEEAEEEAKQKNSRAAKAAAAE) is disordered. The segment covering 108–117 (SRAAKAAAAE) has biased composition (low complexity).

It belongs to the RNA polymerase subunit omega family. In terms of assembly, the RNAP catalytic core consists of 2 alpha, 1 beta, 1 beta' and 1 omega subunit. When a sigma factor is associated with the core the holoenzyme is formed, which can initiate transcription.

The enzyme catalyses RNA(n) + a ribonucleoside 5'-triphosphate = RNA(n+1) + diphosphate. Promotes RNA polymerase assembly. Latches the N- and C-terminal regions of the beta' subunit thereby facilitating its interaction with the beta and alpha subunits. The chain is DNA-directed RNA polymerase subunit omega (rpoZ) from Lactococcus lactis subsp. lactis (strain IL1403) (Streptococcus lactis).